Consider the following 126-residue polypeptide: Calcitonin receptor-stimulating peptide 1 (126 aa).

Residues Met-1–Thr-25 form the signal peptide. Residues Ala-26–Gln-78 constitute a propeptide that is removed on maturation. Cys-82 and Cys-87 are joined by a disulfide. Gly-118 is modified (glycine amide). Positions Asn-123 to Ile-126 are excised as a propeptide.

In terms of tissue distribution, mainly expressed in the thyroid gland and CNS. Found in the nerve cells of cerebrum, hippocampus, hypothalamus, pons/midbrain and thalamus.

The protein localises to the secreted. Stimulates cAMP production in porcine kidney cell line LLC-PK1 via the calcitonin receptor (CT) but not via the CT-like (CL) receptor. In Sus scrofa (Pig), this protein is Calcitonin receptor-stimulating peptide 1 (CRSP1).